A 366-amino-acid polypeptide reads, in one-letter code: Carbamoyl phosphate synthase small chain (366 aa).

Residues Met1–Tyr170 form a CPSase region. Positions 47, 221, and 223 each coordinate L-glutamine. The Glutamine amidotransferase type-1 domain occupies Ser173–Lys360. The Nucleophile role is filled by Cys248. The L-glutamine site is built by Leu249, Gln252, Asn290, Gly292, and Tyr293. Residues His333 and Glu335 contribute to the active site.

The protein belongs to the CarA family. Composed of two chains; the small (or glutamine) chain promotes the hydrolysis of glutamine to ammonia, which is used by the large (or ammonia) chain to synthesize carbamoyl phosphate. Tetramer of heterodimers (alpha,beta)4.

The enzyme catalyses hydrogencarbonate + L-glutamine + 2 ATP + H2O = carbamoyl phosphate + L-glutamate + 2 ADP + phosphate + 2 H(+). The catalysed reaction is L-glutamine + H2O = L-glutamate + NH4(+). It functions in the pathway amino-acid biosynthesis; L-arginine biosynthesis; carbamoyl phosphate from bicarbonate: step 1/1. Its pathway is pyrimidine metabolism; UMP biosynthesis via de novo pathway; (S)-dihydroorotate from bicarbonate: step 1/3. Small subunit of the glutamine-dependent carbamoyl phosphate synthetase (CPSase). CPSase catalyzes the formation of carbamoyl phosphate from the ammonia moiety of glutamine, carbonate, and phosphate donated by ATP, constituting the first step of 2 biosynthetic pathways, one leading to arginine and/or urea and the other to pyrimidine nucleotides. The small subunit (glutamine amidotransferase) binds and cleaves glutamine to supply the large subunit with the substrate ammonia. This is Carbamoyl phosphate synthase small chain from Staphylococcus saprophyticus subsp. saprophyticus (strain ATCC 15305 / DSM 20229 / NCIMB 8711 / NCTC 7292 / S-41).